The chain runs to 467 residues: ATP synthase subunit beta (467 aa).

154 to 161 (GGAGVGKT) provides a ligand contact to ATP.

It belongs to the ATPase alpha/beta chains family. As to quaternary structure, F-type ATPases have 2 components, CF(1) - the catalytic core - and CF(0) - the membrane proton channel. CF(1) has five subunits: alpha(3), beta(3), gamma(1), delta(1), epsilon(1). CF(0) has three main subunits: a(1), b(2) and c(9-12). The alpha and beta chains form an alternating ring which encloses part of the gamma chain. CF(1) is attached to CF(0) by a central stalk formed by the gamma and epsilon chains, while a peripheral stalk is formed by the delta and b chains.

It localises to the cell inner membrane. It catalyses the reaction ATP + H2O + 4 H(+)(in) = ADP + phosphate + 5 H(+)(out). Functionally, produces ATP from ADP in the presence of a proton gradient across the membrane. The catalytic sites are hosted primarily by the beta subunits. The polypeptide is ATP synthase subunit beta (Leptospira borgpetersenii serovar Hardjo-bovis (strain JB197)).